Here is a 201-residue protein sequence, read N- to C-terminus: Dermatopontin (201 aa).

The signal sequence occupies residues 1-18 (MDLTLLWVLLPLVTTAWG). Position 19 is a pyrrolidone carboxylic acid (glutamine 19). The tract at residues 19 to 186 (QYGGYGYPYQ…AVERDRQWKF (168 aa)) is 2 X 53-55 AA tandem repeats. Position 23 is a sulfotyrosine (tyrosine 23). 4 repeat units span residues 26–79 (PYQQ…ACMP), 70–75 (DRQWNY), 80–135 (TPQS…CCRY), and 125–130 (DREWQF). Intrachain disulfides connect cysteine 50-cysteine 77, cysteine 90-cysteine 132, cysteine 106-cysteine 133, cysteine 139-cysteine 196, and cysteine 143-cysteine 189. Residues 70–186 (DRQWNYACMP…AVERDRQWKF (117 aa)) are 3 X 6 AA tandem repeats of D-R-[EQ]-W-[NQK]-[FY]. Residues tyrosine 162, tyrosine 164, and tyrosine 167 each carry the sulfotyrosine modification. Residues 181-186 (DRQWKF) form a 2-3 repeat. The residue at position 194 (tyrosine 194) is a Sulfotyrosine.

This sequence belongs to the dermatopontin family. In terms of assembly, interacts with TGFB1, DCN and collagen. Post-translationally, sulfated on tyrosine residue(s).

The protein localises to the secreted. It localises to the extracellular space. The protein resides in the extracellular matrix. Its function is as follows. Seems to mediate adhesion by cell surface integrin binding. May serve as a communication link between the dermal fibroblast cell surface and its extracellular matrix environment. Enhances TGFB1 activity. Inhibits cell proliferation. Accelerates collagen fibril formation, and stabilizes collagen fibrils against low-temperature dissociation. The protein is Dermatopontin (Dpt) of Mus musculus (Mouse).